The sequence spans 358 residues: Methionine aminopeptidase 2 (358 aa).

His-109 is a binding site for substrate. Residues Asp-130, Asp-141, and His-210 each coordinate a divalent metal cation. His-218 serves as a coordination point for substrate. Residues Glu-243 and Glu-339 each coordinate a divalent metal cation.

It belongs to the peptidase M24A family. Methionine aminopeptidase eukaryotic type 2 subfamily. Co(2+) serves as cofactor. The cofactor is Zn(2+). Requires Mn(2+) as cofactor. Fe(2+) is required as a cofactor.

It is found in the cytoplasm. It carries out the reaction Release of N-terminal amino acids, preferentially methionine, from peptides and arylamides.. Its activity is regulated as follows. Irreversibly inhibited by the fungal metabolite fumagillin and the fumagillin analog TNP470, antiangiogenic drugs. In terms of biological role, cotranslationally removes the N-terminal methionine from nascent proteins. The N-terminal methionine is often cleaved when the second residue in the primary sequence is small and uncharged (Met-Ala-, Cys, Gly, Pro, Ser, Thr, or Val). This chain is Methionine aminopeptidase 2, found in Encephalitozoon hellem (strain ATCC 50504) (Microsporidian parasite).